A 212-amino-acid chain; its full sequence is Uracil phosphoribosyltransferase (212 aa).

5-phospho-alpha-D-ribose 1-diphosphate contacts are provided by residues R78, R103, and 130–138 (DPMLATGGS). Uracil is bound by residues I193 and 198-200 (GDA). Residue D199 participates in 5-phospho-alpha-D-ribose 1-diphosphate binding.

It belongs to the UPRTase family. The cofactor is Mg(2+).

The catalysed reaction is UMP + diphosphate = 5-phospho-alpha-D-ribose 1-diphosphate + uracil. The protein operates within pyrimidine metabolism; UMP biosynthesis via salvage pathway; UMP from uracil: step 1/1. With respect to regulation, allosterically activated by GTP. Functionally, catalyzes the conversion of uracil and 5-phospho-alpha-D-ribose 1-diphosphate (PRPP) to UMP and diphosphate. This is Uracil phosphoribosyltransferase from Bordetella petrii (strain ATCC BAA-461 / DSM 12804 / CCUG 43448).